Reading from the N-terminus, the 98-residue chain is MFDQSMTSEALTVTTVTAQDQITQKPLRDSVKASLKNYLGQLNGQEVNDLYELVLAEVEQPLLDMIMQHTRGNQTKAANMMGINRGTLRKKLKKYGMN.

A DNA-binding region (H-T-H motif) is located at residues 74 to 93 (QTKAANMMGINRGTLRKKLK).

Belongs to the transcriptional regulatory Fis family. In terms of assembly, homodimer.

In terms of biological role, activates ribosomal RNA transcription. Plays a direct role in upstream activation of rRNA promoters. The chain is DNA-binding protein Fis from Aliivibrio fischeri (strain ATCC 700601 / ES114) (Vibrio fischeri).